A 139-amino-acid polypeptide reads, in one-letter code: Early placenta insulin-like peptide (139 aa).

Residues 1–25 form the signal peptide; that stretch reads MASLFRSYLPAIWLLLSQLLRESLA. Disulfide bonds link Cys-31–Cys-125, Cys-43–Cys-138, and Cys-124–Cys-129. The propeptide at 59–114 is c peptide; that stretch reads LESGRPKEMVSTSNNKDGQALGTTSEFIPNLSPELKKPLSEGQPSLKKIILSRKKR.

Belongs to the insulin family. As to expression, expressed in placenta, uterus and in fetal perichondrium. Expression levels were increased in both early placentas and molar pregnancies and were reduced in choriocarcinoma cells.

The protein resides in the secreted. May play an important role in trophoblast development and in the regulation of bone formation. This chain is Early placenta insulin-like peptide (INSL4), found in Homo sapiens (Human).